Reading from the N-terminus, the 602-residue chain is Elongation factor 4 (602 aa).

Residues 7–189 form the tr-type G domain; it reads RNIRNFSIIA…AIVHRIPPPK (183 aa). Residues 19–24 and 136–139 each bind GTP; these read DHGKST and NKID.

Belongs to the TRAFAC class translation factor GTPase superfamily. Classic translation factor GTPase family. LepA subfamily.

The protein resides in the cell inner membrane. It carries out the reaction GTP + H2O = GDP + phosphate + H(+). Functionally, required for accurate and efficient protein synthesis under certain stress conditions. May act as a fidelity factor of the translation reaction, by catalyzing a one-codon backward translocation of tRNAs on improperly translocated ribosomes. Back-translocation proceeds from a post-translocation (POST) complex to a pre-translocation (PRE) complex, thus giving elongation factor G a second chance to translocate the tRNAs correctly. Binds to ribosomes in a GTP-dependent manner. In Stenotrophomonas maltophilia (strain R551-3), this protein is Elongation factor 4.